The primary structure comprises 1589 residues: MVKFEKVPILGKESIHVGYDIHTDMVQTIINDCRSSTYVVVNDTNLSKVPYCQDFVQELRSSLPEGSRLLQYAVKPGEANKTRSTKADIEDYLLSKGCTRDTVIIAIGGGIIGDMVGFVAATFMRGVRVVQVPTSLLAMVDSSIGGKTAVDTPLGKNFIGAFWQPQFVLVDVKWLETLPRREFINGMAEVIKTACIWNGLEFERLESNAELFLRVVNGSKVIKVNGLSTGEVNDIHYTNIEAMLEHTFKLVLESIKVKAEVVSSDERESSLRNLLNFGHSVGHAYEAILTPQALHGECVSIGMIKEAELSRYLGILSPTQVSRLTKILAAYGLPISPEEKWFKDLTLQKKTPLDVLLQKMSIDKKNDGSKKKVVILESIGKCYGKSAHYVNDEDLKFVLTDETLVYPFSNIPQEQAKTIVPPGSKSISNRALILAALGKGTCKIKNLLHSDDTKHMLTAVQELKGASITWEDNGETVVLEGHGGETLTASADPLYLGNAGTASRFLTTLAALVNSSSKQDYVVLTGNARMQQRPIGPLVDSLRTNGTKIDYLKSEGSLPLKIYTSTPFKGGRIELAATVSSQYVSSVLMCAPYAENPVTLALVGGKPISQLYVDMTIKMMEKFGIKVEVSTTEPYTYHIPKGQYTNPPEYIIESDASSATYPLAFAAMTGTTVTVPNIGYESLQGDARFAIEVLRPMGCKVEQTANSTTVTGPPTGSLRPLKHVDMEPMTDAFLTASVVAAVAHDNDTDSANVTTIEGIANQRVKECNRIEAMSTELAKFGVATKELPDGIQIHGINSLDLLQLPSNSTGPIGIESYDDHRVAMSLSLLAGMVNYSKSHPAADIKPVRILERRCTGKTWPGWWDVLHTELGAHLDGAEPLGYLSGKKTKRSVVLIGMRAAGKSTLGRWCSQILGYELCDLDVLFEKQYAKGTVKDFVAEHGWDKFREAEANLFKETVEQYGDGGYVFSAGGGLVENEVSREHLKKYASDGGVVLHLHRDIEETIVFLQSDPTRPAYMEEIRDVWERREKWYNECSNFAFLAPHCSNEKEFQHLRKSFANYITAITGNREVQVPNKRSAFVCLTFGDLTEKASVLPSIVRGCDAVELRVDHLAKYDSQFVSKQLSTLRTATNDLPIVFTLRTKKQGGKFPDEDYTGMARLFDVALKACVEYIDLELTLPIDVQYKVSNTKGYTKIIGSHHDFGAKYPWKDPEWENRYNQALSLDVDVIKFVGTATKFEDNLALERFREEHKSKPLIAINMGEIGKISRVLNPILTPITSEHLPNSSAPGQLTLAQINKIFASMGGITSKKFFVVGNPVSHSRSPVLHNTGYKLNGLPHHFDRFETDSAQVVKETLLDGEPSLGGLAVTIPLKLDIMKYMNQLTDAARVIGAMNTVIPLGNHHFKGDNTDWIGIKHSLTSNGVPEKVSNVAGLVIGAGGTSRAAIYSLHNLGCHRIFVINRTVSKSIELRDSFPQEYNVVAAETTQQIDHLNEHIGIAVSCVPADKDLDTELLAKLERFLHKGKHNSFVPTLLEAAYKPDVTPVMKLAHDKYQWQVVPGRELLVHQGVAQFEIWTGAKAPFQEIFNAVTRD.

Positions 1–392 (MVKFEKVPIL…YGKSAHYVND (392 aa)) are 3-dehydroquinate synthase. NAD(+) contacts are provided by residues 43-45 (DTN), 78-81 (EANK), 109-111 (GGI), and aspartate 114. Arginine 125 serves as a coordination point for 7-phospho-2-dehydro-3-deoxy-D-arabino-heptonate. 134–135 (TS) serves as a coordination point for NAD(+). 2 residues coordinate 7-phospho-2-dehydro-3-deoxy-D-arabino-heptonate: aspartate 141 and lysine 147. Residue lysine 156 coordinates NAD(+). Residue asparagine 157 participates in 7-phospho-2-dehydro-3-deoxy-D-arabino-heptonate binding. NAD(+)-binding positions include 174–177 (WLET) and asparagine 185. Residue glutamate 189 participates in Zn(2+) binding. 7-phospho-2-dehydro-3-deoxy-D-arabino-heptonate is bound by residues 189–192 (EVIK) and lysine 258. Glutamate 268 acts as the Proton acceptor; for 3-dehydroquinate synthase activity in catalysis. 7-phospho-2-dehydro-3-deoxy-D-arabino-heptonate contacts are provided by residues 272–276 (RNLLN) and histidine 279. Histidine 279 is a Zn(2+) binding site. The Proton acceptor; for 3-dehydroquinate synthase activity role is filled by histidine 283. 7-phospho-2-dehydro-3-deoxy-D-arabino-heptonate contacts are provided by histidine 295 and lysine 364. Histidine 295 lines the Zn(2+) pocket. The EPSP synthase stretch occupies residues 405-872 (VYPFSNIPQE…WDVLHTELGA (468 aa)). Residue cysteine 854 is the For EPSP synthase activity of the active site. A shikimate kinase region spans residues 891–1081 (SVVLIGMRAA…VPNKRSAFVC (191 aa)). 896–903 (GMRAAGKS) is a binding site for ATP. Positions 1082–1294 (LTFGDLTEKA…SAPGQLTLAQ (213 aa)) are 3-dehydroquinase. Residue histidine 1199 is the Proton acceptor; for 3-dehydroquinate dehydratase activity of the active site. Catalysis depends on lysine 1228, which acts as the Schiff-base intermediate with substrate; for 3-dehydroquinate dehydratase activity. The tract at residues 1307-1589 (SKKFFVVGNP…QEIFNAVTRD (283 aa)) is shikimate dehydrogenase.

The protein in the N-terminal section; belongs to the sugar phosphate cyclases superfamily. Dehydroquinate synthase family. It in the 2nd section; belongs to the EPSP synthase family. This sequence in the 3rd section; belongs to the shikimate kinase family. In the 4th section; belongs to the type-I 3-dehydroquinase family. The protein in the C-terminal section; belongs to the shikimate dehydrogenase family. In terms of assembly, homodimer. Zn(2+) serves as cofactor.

It is found in the cytoplasm. The catalysed reaction is 7-phospho-2-dehydro-3-deoxy-D-arabino-heptonate = 3-dehydroquinate + phosphate. The enzyme catalyses 3-dehydroquinate = 3-dehydroshikimate + H2O. It catalyses the reaction shikimate + NADP(+) = 3-dehydroshikimate + NADPH + H(+). It carries out the reaction shikimate + ATP = 3-phosphoshikimate + ADP + H(+). The catalysed reaction is 3-phosphoshikimate + phosphoenolpyruvate = 5-O-(1-carboxyvinyl)-3-phosphoshikimate + phosphate. The protein operates within metabolic intermediate biosynthesis; chorismate biosynthesis; chorismate from D-erythrose 4-phosphate and phosphoenolpyruvate: step 2/7. It functions in the pathway metabolic intermediate biosynthesis; chorismate biosynthesis; chorismate from D-erythrose 4-phosphate and phosphoenolpyruvate: step 3/7. It participates in metabolic intermediate biosynthesis; chorismate biosynthesis; chorismate from D-erythrose 4-phosphate and phosphoenolpyruvate: step 4/7. Its pathway is metabolic intermediate biosynthesis; chorismate biosynthesis; chorismate from D-erythrose 4-phosphate and phosphoenolpyruvate: step 5/7. The protein operates within metabolic intermediate biosynthesis; chorismate biosynthesis; chorismate from D-erythrose 4-phosphate and phosphoenolpyruvate: step 6/7. In terms of biological role, the AROM polypeptide catalyzes 5 consecutive enzymatic reactions in prechorismate polyaromatic amino acid biosynthesis. The protein is Pentafunctional AROM polypeptide of Zygosaccharomyces rouxii (strain ATCC 2623 / CBS 732 / NBRC 1130 / NCYC 568 / NRRL Y-229).